A 323-amino-acid polypeptide reads, in one-letter code: tRNA U34 carboxymethyltransferase (323 aa).

Carboxy-S-adenosyl-L-methionine is bound by residues Lys91, Trp105, Lys110, Gly130, 152 to 154 (DPT), 181 to 182 (IE), Met196, Tyr200, and Arg315.

This sequence belongs to the class I-like SAM-binding methyltransferase superfamily. CmoB family. Homotetramer.

The enzyme catalyses carboxy-S-adenosyl-L-methionine + 5-hydroxyuridine(34) in tRNA = 5-carboxymethoxyuridine(34) in tRNA + S-adenosyl-L-homocysteine + H(+). Its function is as follows. Catalyzes carboxymethyl transfer from carboxy-S-adenosyl-L-methionine (Cx-SAM) to 5-hydroxyuridine (ho5U) to form 5-carboxymethoxyuridine (cmo5U) at position 34 in tRNAs. In Salmonella typhimurium (strain LT2 / SGSC1412 / ATCC 700720), this protein is tRNA U34 carboxymethyltransferase.